Here is a 304-residue protein sequence, read N- to C-terminus: Uricase (304 aa).

At alanine 2 the chain carries N-acetylalanine. 2 positions are modified to N6-acetyllysine; alternate: lysine 10 and lysine 23. N6-succinyllysine; alternate occurs at positions 10 and 23. Catalysis depends on lysine 23, which acts as the Charge relay system. Residues lysine 27 and lysine 36 each carry the N6-acetyllysine modification. Phosphoserine occurs at positions 39 and 63. Threonine 68 acts as the Charge relay system in catalysis. Residues threonine 68 and aspartate 69 each coordinate urate. N6-acetyllysine is present on residues lysine 118, lysine 122, and lysine 164. Residue phenylalanine 170 coordinates urate. Lysine 175 and lysine 185 each carry N6-acetyllysine. Arginine 187 contributes to the urate binding site. Residues lysine 221 and lysine 228 each carry the N6-acetyllysine; alternate modification. Residues lysine 221 and lysine 228 each carry the N6-succinyllysine; alternate modification. Serine 232 bears the Phosphoserine mark. Residues valine 235, glutamine 236, and asparagine 262 each contribute to the urate site. Histidine 264 (charge relay system) is an active-site residue. Lysine 278 carries the post-translational modification N6-acetyllysine. Tyrosine 289 is subject to Phosphotyrosine. Residues 302 to 304 (SRL) carry the Microbody targeting signal motif.

This sequence belongs to the uricase family.

It localises to the peroxisome. It catalyses the reaction urate + O2 + H2O = 5-hydroxyisourate + H2O2. Its pathway is purine metabolism; urate degradation; (S)-allantoin from urate: step 1/3. Catalyzes the oxidation of uric acid to 5-hydroxyisourate, which is further processed to form (S)-allantoin. In Macaca fascicularis (Crab-eating macaque), this protein is Uricase (UOX).